The sequence spans 513 residues: Maturase K (513 aa).

This sequence belongs to the intron maturase 2 family. MatK subfamily.

It localises to the plastid. The protein resides in the chloroplast. Usually encoded in the trnK tRNA gene intron. Probably assists in splicing its own and other chloroplast group II introns. The polypeptide is Maturase K (Zea mays (Maize)).